Here is a 223-residue protein sequence, read N- to C-terminus: Alpha-S2-casein (223 aa).

An N-terminal signal peptide occupies residues 1 to 15 (MKLFIFTCLLAVALA). Phosphoserine occurs at positions 23, 24, 25, 28, 46, 71, 72, and 73. 2 consecutive repeats follow at residues 76-128 (FADI…TLGK) and 129-223 (EQIS…ERQA). A phosphoserine mark is found at serine 132, serine 147, and serine 155.

It belongs to the alpha-casein family. As to expression, mammary gland specific. Secreted in milk.

Its subcellular location is the secreted. Functionally, important role in the capacity of milk to transport calcium phosphate. The protein is Alpha-S2-casein (CSN1S2) of Cavia porcellus (Guinea pig).